Here is a 461-residue protein sequence, read N- to C-terminus: Photosystem II CP43 reaction center protein (461 aa).

The Cytoplasmic segment spans residues 1 to 48 (MVTLSSNSIFATNRDQESSGFAWWAGNARLINLSGKLLGAHVAHAGLI). A helical membrane pass occupies residues 49 to 71 (VFWAGAMTLFELAHFIPEKPMYE). Residues 72–111 (QGLILIPHIATLGWGVGPGGEVVDTFPFFVVGVVHLISSA) lie on the Lumenal side of the membrane. Residues 112 to 133 (VLGFGGVYHAIRGPETLEEYSS) traverse the membrane as a helical segment. Topologically, residues 134–155 (FFGYDWKDKNKMTTILGFHLIV) are cytoplasmic. The helical transmembrane segment at 156–178 (LGIGALLLVAKAMFFGGLYDTWA) threads the bilayer. Residues 179 to 232 (PGGGDVRVITNPTLDPRVIFGYLLKSPFGGEGWIVSVNNLEDVVGGHIWIGLIC) are Lumenal-facing. A helical membrane pass occupies residues 233 to 253 (IAGGIWHILTTPFGWARRAFI). The Cytoplasmic segment spans residues 254–268 (WSGEAYLSYSLGALS). A helical transmembrane segment spans residues 269-289 (MMGFIATCFVWFNNTVYPSEF). Over 290–424 (YGPTGPEASQ…ATSHFVLAFF (135 aa)) the chain is Lumenal. Glu-355 contacts [CaMn4O5] cluster. A helical transmembrane segment spans residues 425 to 449 (FLVGHLWHAGRARAAAAGFEKGIDR). Residues 450 to 461 (ESEPVLSMPSLD) are Cytoplasmic-facing.

As to quaternary structure, PSII is composed of 1 copy each of membrane proteins PsbA, PsbB, PsbC, PsbD, PsbE, PsbF, PsbH, PsbI, PsbJ, PsbK, PsbL, PsbM, PsbT, PsbX, PsbY, PsbZ, Psb30/Ycf12, peripheral proteins PsbO, CyanoQ (PsbQ), PsbU, PsbV and a large number of cofactors. It forms dimeric complexes. Part of a photosystem II (PSII) assembly intermediate complex PSII-I; crystallized from a strain deleted of psbJ, it forms monomeric PSII before addition of the oxygen evolving complex. PSII-I includes 3 assembly factors not found in mature PSII (Psb27, Psb28 and Psb34), and CP43 (this protein) is not in its mature conformation. It depends on Binds multiple chlorophylls and provides some of the ligands for the Ca-4Mn-5O cluster of the oxygen-evolving complex. It may also provide a ligand for a Cl- that is required for oxygen evolution. PSII binds additional chlorophylls, carotenoids and specific lipids. as a cofactor.

It localises to the cellular thylakoid membrane. Functionally, one of the components of the core complex of photosystem II (PSII). It binds chlorophyll and helps catalyze the primary light-induced photochemical processes of PSII. PSII is a light-driven water:plastoquinone oxidoreductase, using light energy to abstract electrons from H(2)O, generating O(2) and a proton gradient subsequently used for ATP formation. The sequence is that of Photosystem II CP43 reaction center protein from Thermosynechococcus vestitus (strain NIES-2133 / IAM M-273 / BP-1).